Reading from the N-terminus, the 167-residue chain is uncharacterized protein (167 aa).

To B.subtilis XkdI.

This is an uncharacterized protein from Bacillus subtilis (strain 168).